Here is a 116-residue protein sequence, read N- to C-terminus: Large ribosomal subunit protein bL20c (116 aa).

This sequence belongs to the bacterial ribosomal protein bL20 family.

The protein resides in the plastid. The protein localises to the chloroplast. Binds directly to 23S ribosomal RNA and is necessary for the in vitro assembly process of the 50S ribosomal subunit. It is not involved in the protein synthesizing functions of that subunit. The protein is Large ribosomal subunit protein bL20c of Oltmannsiellopsis viridis (Marine flagellate).